Reading from the N-terminus, the 117-residue chain is Putative pterin-4-alpha-carbinolamine dehydratase (117 aa).

The protein belongs to the pterin-4-alpha-carbinolamine dehydratase family.

It carries out the reaction (4aS,6R)-4a-hydroxy-L-erythro-5,6,7,8-tetrahydrobiopterin = (6R)-L-erythro-6,7-dihydrobiopterin + H2O. This chain is Putative pterin-4-alpha-carbinolamine dehydratase, found in Colwellia psychrerythraea (strain 34H / ATCC BAA-681) (Vibrio psychroerythus).